Consider the following 144-residue polypeptide: Histone H2A.Z-specific chaperone CHZ1 (144 aa).

The span at 1–26 shows a compositional bias: basic and acidic residues; it reads MAEELKEKRELEVEEDNTKKDNSDKK. Disordered stretches follow at residues 1 to 85 and 117 to 144; these read MAEE…EQED and AAEGKISLDEDEDEDDEDAKEDDGEFDE. A compositionally biased stretch (acidic residues) spans 125-144; it reads DEDEDEDDEDAKEDDGEFDE.

This sequence belongs to the CHZ1 family. Forms a heterotrimer with H2A.Z-H2B, stabilizing the association of the histone dimer. Also, with a lower affinity, forms a heterotrimer with H2A-H2B.

It localises to the nucleus. Forms a chaperone-bound H2A.Z-H2B complex that acts as a source for SWR1 complex-dependent H2A to H2A.Z histone replacement in chromatin. This Vanderwaltozyma polyspora (strain ATCC 22028 / DSM 70294 / BCRC 21397 / CBS 2163 / NBRC 10782 / NRRL Y-8283 / UCD 57-17) (Kluyveromyces polysporus) protein is Histone H2A.Z-specific chaperone CHZ1 (CHZ1).